The chain runs to 339 residues: Spore coat polysaccharide biosynthesis protein SpsG (339 aa).

A helical transmembrane segment spans residues 241–261 (IVAGGISLYEAICIGVPCLVL).

To M.jannaschii MJ1062.

The protein resides in the cell membrane. It functions in the pathway spore coat biogenesis; spore coat polysaccharide biosynthesis. The polypeptide is Spore coat polysaccharide biosynthesis protein SpsG (spsG) (Bacillus subtilis (strain 168)).